Reading from the N-terminus, the 572-residue chain is Proline--tRNA ligase (572 aa).

This sequence belongs to the class-II aminoacyl-tRNA synthetase family. ProS type 1 subfamily. In terms of assembly, homodimer.

It is found in the cytoplasm. The catalysed reaction is tRNA(Pro) + L-proline + ATP = L-prolyl-tRNA(Pro) + AMP + diphosphate. In terms of biological role, catalyzes the attachment of proline to tRNA(Pro) in a two-step reaction: proline is first activated by ATP to form Pro-AMP and then transferred to the acceptor end of tRNA(Pro). As ProRS can inadvertently accommodate and process non-cognate amino acids such as alanine and cysteine, to avoid such errors it has two additional distinct editing activities against alanine. One activity is designated as 'pretransfer' editing and involves the tRNA(Pro)-independent hydrolysis of activated Ala-AMP. The other activity is designated 'posttransfer' editing and involves deacylation of mischarged Ala-tRNA(Pro). The misacylated Cys-tRNA(Pro) is not edited by ProRS. The chain is Proline--tRNA ligase from Pectobacterium carotovorum subsp. carotovorum (strain PC1).